Consider the following 152-residue polypeptide: Endoribonuclease YbeY (152 aa).

The Zn(2+) site is built by His-111, His-115, and His-121.

The protein belongs to the endoribonuclease YbeY family. The cofactor is Zn(2+).

It localises to the cytoplasm. Functionally, single strand-specific metallo-endoribonuclease involved in late-stage 70S ribosome quality control and in maturation of the 3' terminus of the 16S rRNA. The protein is Endoribonuclease YbeY of Pseudomonas fluorescens (strain ATCC BAA-477 / NRRL B-23932 / Pf-5).